The sequence spans 413 residues: Monacolin J acid methylbutanoyltransferase (413 aa).

Arg73 lines the monacolin J pocket. Ser76 serves as the catalytic Acyl-ester intermediate. Residues Arg173, Tyr188, and Tyr258 each contribute to the monacolin J site. Gly366 serves as a coordination point for 2-methylbutanoate. Monacolin J-binding residues include Glu388 and Trp390.

The protein belongs to the class-A beta-lactamase family. As to quaternary structure, interacts with LovF.

It carries out the reaction monacolin J carboxylate + (S)-2-methylbutanoyl-[2-methylbutanoate polyketide synthase] = lovastatin carboxylate + holo-[2-methylbutanoate polyketide synthase]. Its pathway is polyketide biosynthesis; lovastatin biosynthesis. Monacolin J acid methylbutanoyltransferase; part of the gene cluster that mediates the biosynthesis of lovastatin (also known as mevinolin, mevacor or monacolin K), a hypolipidemic inhibitor of (3S)-hydroxymethylglutaryl-coenzyme A (HMG-CoA) reductase (HMGR). The first step in the biosynthesis of lovastatin is the production of dihydromonacolin L acid by the lovastatin nonaketide synthase lovB and the trans-acting enoyl reductase lovC via condensation of one acetyl-CoA unit and 8 malonyl-CoA units. Dihydromonacolin L acid is released from lovB by the thioesterase lovG. Next, dihydromonacolin L acid is oxidized by the dihydromonacolin L monooxygenase lovA twice to form monacolin J acid. The 2-methylbutyrate moiety of lovastatin is synthesized by the lovastatin diketide synthase lovF via condensation of one acetyl-CoA unit and one malonyl-CoA unit. Finally, the covalent attachment of this moiety to monacolin J acid is catalyzed by the transesterase lovD to yield lovastatin. LovD has broad substrate specificity and can also convert monacolin J to simvastatin using alpha-dimethylbutanoyl-S-methyl-3-mercaptopropionate (DMB-S-MMP) as the thioester acyl donor, and can also catalyze the reverse reaction and function as hydrolase in vitro. LovD has much higher activity with LovF-bound 2-methylbutanoate than with free diketide substrates. The polypeptide is Monacolin J acid methylbutanoyltransferase (Aspergillus terreus (strain NIH 2624 / FGSC A1156)).